The sequence spans 174 residues: Squamosa promoter-binding-like protein 4 (174 aa).

The disordered stretch occupies residues 1–42; that stretch reads MEGKRSQGQGYMKKKSYLVEEDMETDTDEEEEVGRDRVRGSR. Residues 19–33 are compositionally biased toward acidic residues; the sequence is VEEDMETDTDEEEEV. The segment at 51 to 128 adopts an SBP-type zinc-finger fold; it reads LRLCQVDRCT…AGHNERRRKS (78 aa). Zn(2+)-binding residues include C54, C59, C76, H79, C95, C98, H102, and C114. The Bipartite nuclear localization signal motif lies at 111–127; that stretch reads KRSCRRRLAGHNERRRK. Over residues 118–127 the composition is skewed to basic residues; sequence LAGHNERRRK. Disordered stretches follow at residues 118-148 and 155-174; these read LAGH…GQVV and SRVE…PQIR. Positions 163–174 are enriched in polar residues; sequence MPNSSFKRPQIR.

It depends on Zn(2+) as a cofactor. Expressed in the rib meristem and inter-primordial tissue of the inflorescence apex.

The protein resides in the nucleus. Its subcellular location is the cytoplasm. Trans-acting factor that binds specifically to the consensus nucleotide sequence 5'-TNCGTACAA-3' of AP1 promoter. Promotes both vegetative phase change and flowering. This chain is Squamosa promoter-binding-like protein 4 (SPL4), found in Arabidopsis thaliana (Mouse-ear cress).